A 417-amino-acid chain; its full sequence is UDP-N-acetylglucosamine 1-carboxyvinyltransferase (417 aa).

22–23 (KN) contributes to the phosphoenolpyruvate binding site. UDP-N-acetyl-alpha-D-glucosamine is bound at residue Arg92. The Proton donor role is filled by Cys116. Cys116 carries the post-translational modification 2-(S-cysteinyl)pyruvic acid O-phosphothioketal. Positions 304 and 326 each coordinate UDP-N-acetyl-alpha-D-glucosamine.

This sequence belongs to the EPSP synthase family. MurA subfamily.

Its subcellular location is the cytoplasm. It catalyses the reaction phosphoenolpyruvate + UDP-N-acetyl-alpha-D-glucosamine = UDP-N-acetyl-3-O-(1-carboxyvinyl)-alpha-D-glucosamine + phosphate. It functions in the pathway cell wall biogenesis; peptidoglycan biosynthesis. Cell wall formation. Adds enolpyruvyl to UDP-N-acetylglucosamine. The sequence is that of UDP-N-acetylglucosamine 1-carboxyvinyltransferase from Desulforapulum autotrophicum (strain ATCC 43914 / DSM 3382 / VKM B-1955 / HRM2) (Desulfobacterium autotrophicum).